The chain runs to 292 residues: Ventral anterior homeobox 2 (292 aa).

Residues 1 to 36 (MGDGGAERDRGPKRREEPGGRSGCRGEHRGAEDLRA) are compositionally biased toward basic and acidic residues. Residues 1 to 74 (MGDGGAERDR…DGQQALGETD (74 aa)) are disordered. Positions 38-55 (TGSTSPREIAGTSASSPA) are enriched in polar residues. The homeobox DNA-binding region spans 102 to 161 (PKRTRTSFTAEQLYRLEMEFQRCQYVVGRERTELARQLNLSETQVKVWFQNRRTKQKKDQ). The disordered stretch occupies residues 212 to 241 (AGHRGTSLGDPRNSSQRLNPMPSASASSPL).

This sequence belongs to the EMX homeobox family.

The protein resides in the nucleus. In terms of biological role, transcription factor that may function in dorsoventral specification of the forebrain. Regulates the expression of Wnt signaling antagonists including the expression of a truncated TCF7L2 isoform that cannot bind CTNNB1 and acts therefore as a potent dominant-negative Wnt antagonist. Plays a crucial role in eye development and, in particular, in the specification of the ventral optic vesicle. May be a regulator of axial polarization in the retina. This Rattus norvegicus (Rat) protein is Ventral anterior homeobox 2 (Vax2).